A 512-amino-acid polypeptide reads, in one-letter code: Alanine--glyoxylate aminotransferase 2, mitochondrial (512 aa).

A mitochondrion-targeting transit peptide spans 1-39 (MSLAWRTLQKAFYLETSLRILQMRPSLSCASRIYVPKLT). Residue Lys-55 is modified to N6-acetyllysine. Lys-69 carries the N6-acetyllysine; alternate modification. Lys-69 carries the post-translational modification N6-succinyllysine; alternate. Lys-82 carries the post-translational modification N6-acetyllysine. Lys-260 bears the N6-acetyllysine; alternate mark. Position 260 is an N6-succinyllysine; alternate (Lys-260). Lys-302 is subject to N6-succinyllysine. Lys-348 carries the post-translational modification N6-(pyridoxal phosphate)lysine. Lys-415 and Lys-418 each carry N6-acetyllysine; alternate. Residues Lys-415 and Lys-418 each carry the N6-succinyllysine; alternate modification. Residue Lys-452 is modified to N6-acetyllysine.

It belongs to the class-III pyridoxal-phosphate-dependent aminotransferase family. In terms of assembly, homotetramer. Pyridoxal 5'-phosphate serves as cofactor. As to expression, expressed in the liver, lung and kidney.

The protein resides in the mitochondrion. The enzyme catalyses glyoxylate + L-alanine = glycine + pyruvate. The catalysed reaction is (R)-3-amino-2-methylpropanoate + pyruvate = 2-methyl-3-oxopropanoate + L-alanine. It carries out the reaction 3-oxopropanoate + L-alanine = beta-alanine + pyruvate. It catalyses the reaction 2-oxobutanoate + L-alanine = (2S)-2-aminobutanoate + pyruvate. The enzyme catalyses N(omega),N(omega)-dimethyl-L-arginine + pyruvate = 5-(3,3-dimethylguanidino)-2-oxopentanoate + L-alanine. The catalysed reaction is N(omega),N('omega)-dimethyl-L-arginine + pyruvate = 5-(3,3'-dimethylguanidino)-2-oxopentanoate + L-alanine. It carries out the reaction N(omega),N(omega)-dimethyl-L-arginine + glyoxylate = 5-(3,3-dimethylguanidino)-2-oxopentanoate + glycine. It catalyses the reaction N(omega),N('omega)-dimethyl-L-arginine + glyoxylate = 5-(3,3'-dimethylguanidino)-2-oxopentanoate + glycine. The enzyme catalyses N(omega)-methyl-L-arginine + pyruvate = 5-(3-methylguanidino)-2-oxopentanoate + L-alanine. The catalysed reaction is N(omega)-methyl-L-arginine + glyoxylate = 5-(3-methylguanidino)-2-oxopentanoate + glycine. It carries out the reaction L-ornithine + pyruvate = 5-amino-2-oxopentanoate + L-alanine. It catalyses the reaction L-ornithine + glyoxylate = 5-amino-2-oxopentanoate + glycine. The enzyme catalyses (2S)-2-aminobutanoate + glyoxylate = 2-oxobutanoate + glycine. The catalysed reaction is N(omega),N(omega)-dimethyl-L-arginine + oxaloacetate = 5-(3,3-dimethylguanidino)-2-oxopentanoate + L-aspartate. It carries out the reaction oxaloacetate + L-alanine = L-aspartate + pyruvate. It catalyses the reaction N(omega),N(omega)-dimethyl-L-arginine + 2-oxobutanoate = 5-(3,3-dimethylguanidino)-2-oxopentanoate + (2S)-2-aminobutanoate. The enzyme catalyses 2-oxopentanoate + N(omega),N(omega)-dimethyl-L-arginine = 5-(3,3-dimethylguanidino)-2-oxopentanoate + L-2-aminopentanoate. The catalysed reaction is 2-oxohexanoate + N(omega),N(omega)-dimethyl-L-arginine = L-2-aminohexanoate + 5-(3,3-dimethylguanidino)-2-oxopentanoate. With respect to regulation, inhibited by 5-fluorouracil and 6-fluorouracil. Inhibited by phenylhydrazine, hydroxylamine, l-amino-L-proline, para-chloromercuribenzoate and HgCl2. In terms of biological role, multifunctional aminotransferase with a broad substrate specificity. Catalyzes the conversion of glyoxylate to glycine using alanine as the amino donor. Catalyzes metabolism of not L- but the D-isomer of D-beta-aminoisobutyric acid to generate 2-methyl-3-oxopropanoate and alanine. Catalyzes the transfer of the amino group from beta-alanine to pyruvate to yield L-alanine and 3-oxopropanoate. Can metabolize NG-monomethyl-L-arginine (NMMA), asymmetric NG,NG-dimethyl-L-arginine (ADMA) and symmetric NG,N'G-dimethyl-L-arginine (SDMA). ADMA is a potent inhibitor of nitric-oxide (NO) synthase, and this activity provides mechanism through which the kidney regulates blood pressure. The protein is Alanine--glyoxylate aminotransferase 2, mitochondrial (Agxt2) of Rattus norvegicus (Rat).